The chain runs to 980 residues: LRR receptor-like serine/threonine-protein kinase SIK1 (980 aa).

Residues 1 to 24 (MAAARAPWLWWWVVVVVGVAVAEA) form the signal peptide. Residues 25–588 (ASGGGGGGDG…HGQRVNISKT (564 aa)) are Extracellular-facing. Asn-72 and Asn-81 each carry an N-linked (GlcNAc...) asparagine glycan. LRR repeat units lie at residues 75–98 (FAVL…IGEL), 99–122 (KNLQ…IGDC), 124–146 (SLKY…ISKL), 147–170 (KQLE…LSQI), 171–194 (PNLK…IYWN), 196–218 (VLQY…MCQL), 219–242 (TGLW…IGNC), 243–265 (TSFE…NIGF), 266–289 (LQVA…IGLM), 290–312 (QALA…ILGN), 314–337 (SYTG…LGNM), 338–361 (SKLS…LGKL), 362–385 (EELF…ISSC), 387–408 (ALNK…GFQK), 409–433 (LESL…LGHI), 435–457 (NLDT…IGDL), 458–480 (EHLL…EFGN), 481–505 (LRSV…LGQL), 507–529 (NLDS…LANC), and 531–554 (SLNN…NFSK). Asn-230 and Asn-241 each carry an N-linked (GlcNAc...) asparagine glycan. Asn-312 and Asn-336 each carry an N-linked (GlcNAc...) asparagine glycan. N-linked (GlcNAc...) asparagine glycans are attached at residues Asn-381, Asn-399, and Asn-416. Residues Asn-464 and Asn-493 are each glycosylated (N-linked (GlcNAc...) asparagine). N-linked (GlcNAc...) asparagine glycans are attached at residues Asn-536, Asn-541, Asn-551, and Asn-584. A helical membrane pass occupies residues 589–609 (AIACIILGFIILLCVLLLAIY). Residues 610–980 (KTNQPQPLVK…FGEVISKHTM (371 aa)) lie on the Cytoplasmic side of the membrane. The Protein kinase domain maps to 653–923 (LSEKYIIGYG…EVARVLLSLL (271 aa)). ATP is bound by residues 659–667 (IGYGASSTV) and Lys-681. Residue Asp-778 is the Proton acceptor of the active site.

The protein belongs to the protein kinase superfamily. Ser/Thr protein kinase family. In terms of processing, autophosphorylated. Expressed in nodes, vascular bundles of stems, and anthers.

It localises to the cell membrane. The enzyme catalyses L-seryl-[protein] + ATP = O-phospho-L-seryl-[protein] + ADP + H(+). The catalysed reaction is L-threonyl-[protein] + ATP = O-phospho-L-threonyl-[protein] + ADP + H(+). In terms of biological role, receptor kinase involved in salt drought stress responses. Acts as a positive regulator of salt and drought tolerance. May promote salt and drought tolerance through the induction of the activities of antioxidative enzymes, such as peroxidase, superoxide dismutase and catalase. May be involved in the control of stomatal development in leaf epidermis. Possesses kinase activity in vitro. Does not seem to be involved in heat tolerance. This chain is LRR receptor-like serine/threonine-protein kinase SIK1, found in Oryza sativa subsp. japonica (Rice).